A 246-amino-acid chain; its full sequence is Bacteriorhodopsin-II-like protein (246 aa).

7 consecutive transmembrane segments (helical) span residues 7-27 (EATW…YFAV), 45-65 (TLIP…LGVI), 82-102 (YADW…VAGA), 107-127 (LYKL…GSMM), 135-155 (IVWW…LLGE), 182-202 (WALY…IIAV), and 205-225 (EIML…AVLL). K217 carries the post-translational modification N6-(retinylidene)lysine.

Belongs to the archaeal/bacterial/fungal opsin family. Post-translationally, the covalent binding of retinal to the apoprotein, bacterioopsin, generates bacteriorhodopsin.

The protein resides in the cell membrane. In terms of biological role, has no proton-pumping activity but is potentially capable of functioning as a sensory SRII-like protein. The chromophore contains 36.5% all-trans-, 7.6% 11-cis- and 56.4% 13-cis-retinal in the dark and 30.1% 11-cis- and 47.7% 13-cis-retinal upon illumination with &gt;460 nm light. This Haloquadratum walsbyi (strain DSM 16790 / HBSQ001) protein is Bacteriorhodopsin-II-like protein (bop2).